A 462-amino-acid polypeptide reads, in one-letter code: 2-amino-5-chloromuconic acid deaminase (462 aa).

Residues Lys79 and Ser156 each act as charge relay system in the active site. The Acyl-ester intermediate role is filled by Ser180.

This sequence belongs to the amidase family.

It carries out the reaction (2Z,4E)-2-aminomuconate + H2O = (3E)-2-oxohex-3-enedioate + NH4(+). Its pathway is xenobiotic degradation; nitrobenzene degradation. It participates in xenobiotic degradation; 4-chloronitrobenzene degradation. Involved in the biodegradation of nitroaromatic and chlorinated nitroaromatic compounds. Catalyzes the conversion of 2-amino-5-chloromuconic acid into 2-hydroxy-5-chloromuconic acid and ammonia. Also able to catalyze the transformation of 2-aminomuconic acid into 2-hydroxymuconic acid. This is 2-amino-5-chloromuconic acid deaminase from Comamonas testosteroni (Pseudomonas testosteroni).